Consider the following 521-residue polypeptide: Bifunctional purine biosynthesis protein PurH (521 aa).

The 147-residue stretch at 1-147 (MGEITRALIS…KNWEGVTVLV (147 aa)) folds into the MGS-like domain.

Belongs to the PurH family.

It catalyses the reaction (6R)-10-formyltetrahydrofolate + 5-amino-1-(5-phospho-beta-D-ribosyl)imidazole-4-carboxamide = 5-formamido-1-(5-phospho-D-ribosyl)imidazole-4-carboxamide + (6S)-5,6,7,8-tetrahydrofolate. The catalysed reaction is IMP + H2O = 5-formamido-1-(5-phospho-D-ribosyl)imidazole-4-carboxamide. The protein operates within purine metabolism; IMP biosynthesis via de novo pathway; 5-formamido-1-(5-phospho-D-ribosyl)imidazole-4-carboxamide from 5-amino-1-(5-phospho-D-ribosyl)imidazole-4-carboxamide (10-formyl THF route): step 1/1. It functions in the pathway purine metabolism; IMP biosynthesis via de novo pathway; IMP from 5-formamido-1-(5-phospho-D-ribosyl)imidazole-4-carboxamide: step 1/1. In Acidithiobacillus ferrooxidans (strain ATCC 53993 / BNL-5-31) (Leptospirillum ferrooxidans (ATCC 53993)), this protein is Bifunctional purine biosynthesis protein PurH.